A 484-amino-acid chain; its full sequence is Probable glycine dehydrogenase (decarboxylating) subunit 2 (484 aa).

At K270 the chain carries N6-(pyridoxal phosphate)lysine.

Belongs to the GcvP family. C-terminal subunit subfamily. The glycine cleavage system is composed of four proteins: P, T, L and H. In this organism, the P 'protein' is a heterodimer of two subunits. Requires pyridoxal 5'-phosphate as cofactor.

The enzyme catalyses N(6)-[(R)-lipoyl]-L-lysyl-[glycine-cleavage complex H protein] + glycine + H(+) = N(6)-[(R)-S(8)-aminomethyldihydrolipoyl]-L-lysyl-[glycine-cleavage complex H protein] + CO2. Its function is as follows. The glycine cleavage system catalyzes the degradation of glycine. The P protein binds the alpha-amino group of glycine through its pyridoxal phosphate cofactor; CO(2) is released and the remaining methylamine moiety is then transferred to the lipoamide cofactor of the H protein. The chain is Probable glycine dehydrogenase (decarboxylating) subunit 2 from Desulforamulus reducens (strain ATCC BAA-1160 / DSM 100696 / MI-1) (Desulfotomaculum reducens).